Consider the following 451-residue polypeptide: Tryptophan--tRNA ligase (451 aa).

ATP is bound by residues 10-12 (TTT) and 18-19 (GN). A 'HIGH' region motif is present at residues 11–19 (TTGTPHLGN). Asp-143 serves as a coordination point for L-tryptophan. Residues 155–157 (GRD), Leu-195, and 202–206 (KMSKS) each bind ATP. The 'KMSKS' region motif lies at 202–206 (KMSKS).

Belongs to the class-I aminoacyl-tRNA synthetase family. Homodimer.

Its subcellular location is the cytoplasm. The enzyme catalyses tRNA(Trp) + L-tryptophan + ATP = L-tryptophyl-tRNA(Trp) + AMP + diphosphate + H(+). Catalyzes the attachment of tryptophan to tRNA(Trp). The protein is Tryptophan--tRNA ligase of Bordetella bronchiseptica (strain ATCC BAA-588 / NCTC 13252 / RB50) (Alcaligenes bronchisepticus).